We begin with the raw amino-acid sequence, 329 residues long: MRILSNVNLMGLLIVLLAAIFFCFHNVIVRILYSQQNILGIWQVGGFVTPTLSHSFLLLLLRMLWVVPLMALISQRLYGNTWREINQLKQPVNRPVIWEAMGCGFLMFLYLVLLYISISFIPTGIAITLFFTYPIFTALLAWRLFNDVPSLLRWLVIGLTLIGTFLTIPYAYGGEQQTLVLGVSTGIASGIVYAGYTVFAQRSFQRLHPVPFTWISFATTLILSILCLIIWQPHEGNLPWLAITIGSLLSALFTLAGHVLNNWGIHLIGASRAAIIGATNPALTVVLAGLAIQESLTNIQIFGVCLVTFSIALLNYEKVSPSTGKNSLK.

Helical transmembrane passes span 9–29 (LMGL…NVIV), 53–73 (SHSF…MALI), 105–125 (FLMF…PTGI), 126–146 (AITL…RLFN), 154–174 (WLVI…AYGG), 179–199 (LVLG…YTVF), 210–230 (VPFT…CLII), 240–260 (WLAI…GHVL), 273–293 (AAII…LAIQ), and 296–316 (LTNI…LLNY). EamA domains follow at residues 103-169 (CGFL…LTIP) and 191-316 (IVYA…LLNY).

It belongs to the EamA transporter family.

The protein localises to the cell membrane. This is an uncharacterized protein from Synechocystis sp. (strain ATCC 27184 / PCC 6803 / Kazusa).